A 520-amino-acid polypeptide reads, in one-letter code: Arabinose import ATP-binding protein AraG (520 aa).

Over residues 1–10 the composition is skewed to polar residues; it reads MTTQTMTAVS. The segment at 1-27 is disordered; it reads MTTQTMTAVSGNDGDTGGDAAESPPGG. ABC transporter domains follow at residues 30–265 and 265–516; these read LALD…MVGR and RSIE…LIKL. 62 to 69 lines the ATP pocket; that stretch reads GENGAGKS.

The protein belongs to the ABC transporter superfamily. Arabinose importer (TC 3.A.1.2.2) family. As to quaternary structure, the complex is composed of two ATP-binding proteins (AraG), two transmembrane proteins (AraH) and a solute-binding protein (AraF).

Its subcellular location is the cell inner membrane. The catalysed reaction is L-arabinose(out) + ATP + H2O = L-arabinose(in) + ADP + phosphate + H(+). Functionally, part of the ABC transporter complex AraFGH involved in L-arabinose import. Responsible for energy coupling to the transport system. The chain is Arabinose import ATP-binding protein AraG from Azospirillum brasilense.